The sequence spans 98 residues: DNA-binding protein Fis (98 aa).

The H-T-H motif DNA-binding region spans 74–93; the sequence is QTRAAQMMGINRGTLRKKLK.

The protein belongs to the transcriptional regulatory Fis family. Homodimer.

Activates ribosomal RNA transcription. Plays a direct role in upstream activation of rRNA promoters. This Sodalis glossinidius (strain morsitans) protein is DNA-binding protein Fis.